A 323-amino-acid polypeptide reads, in one-letter code: RNA polymerase sigma factor SigB (323 aa).

The tract at residues 1–228 (MADAPTRATT…DMPVGSEEEA (228 aa)) is sufficient to interact with RbpA. The interval 25–59 (DLVRVYLNGIGKTALLNAAGEVELAKRIEAGLYAE) is sigma-70 factor domain-1. The interval 90-160 (LLEANLRLVV…TRGMADQSRT (71 aa)) is sigma-70 factor domain-2. The short motif at 114–117 (DLIQ) is the Polymerase core binding element. The interval 169–245 (EQVNKLARIK…DAEAMSAENA (77 aa)) is sigma-70 factor domain-3. A sigma-70 factor domain-4 region spans residues 258–311 (VLATLDEREHQVIRLRFGLDDGQPRTLDQIGKLFGLSRERVRQIERDVMSKLRH). A DNA-binding region (H-T-H motif) is located at residues 284-303 (LDQIGKLFGLSRERVRQIER).

The protein belongs to the sigma-70 factor family. In terms of assembly, monomer. Interacts transiently with the RNA polymerase catalytic core formed by RpoA, RpoB, RpoC and RpoZ (2 alpha, 1 beta, 1 beta' and 1 omega subunit) to form the RNA polymerase holoenzyme that can initiate transcription.

Sigma factors are initiation factors that promote the attachment of RNA polymerase to specific initiation sites and are then released. A non-essential principal sigma factor that responds to cell envelope stress and hypoxia. The protein is RNA polymerase sigma factor SigB (sigB) of Mycobacterium tuberculosis (strain CDC 1551 / Oshkosh).